A 596-amino-acid chain; its full sequence is Probable translation initiation factor IF-2 (596 aa).

The tr-type G domain maps to 3–220 (IRSPIVSVLG…MLLGLAQEYL (218 aa)). A G1 region spans residues 12 to 19 (GHVDHGKT). A GTP-binding site is contributed by 12–19 (GHVDHGKT). A G2 region spans residues 37–41 (GITQH). A G3 region spans residues 76–79 (DTPG). GTP-binding positions include 76–80 (DTPGH) and 130–133 (NKID). Residues 130-133 (NKID) form a G4 region. A G5 region spans residues 198 to 200 (SAK).

This sequence belongs to the TRAFAC class translation factor GTPase superfamily. Classic translation factor GTPase family. IF-2 subfamily.

In terms of biological role, function in general translation initiation by promoting the binding of the formylmethionine-tRNA to ribosomes. Seems to function along with eIF-2. This Methanobrevibacter smithii (strain ATCC 35061 / DSM 861 / OCM 144 / PS) protein is Probable translation initiation factor IF-2.